The following is a 499-amino-acid chain: D-alanine--D-alanyl carrier protein ligase (499 aa).

152–153 (TS) serves as a coordination point for ATP. Aspartate 197 contributes to the D-alanine binding site. Residues 292–297 (NTYGPT), aspartate 372, 384–387 (YQGR), and lysine 485 contribute to the ATP site. Lysine 485 provides a ligand contact to D-alanine.

Belongs to the ATP-dependent AMP-binding enzyme family. DltA subfamily.

It is found in the cytoplasm. It carries out the reaction holo-[D-alanyl-carrier protein] + D-alanine + ATP = D-alanyl-[D-alanyl-carrier protein] + AMP + diphosphate. The protein operates within cell wall biogenesis; lipoteichoic acid biosynthesis. In terms of biological role, catalyzes the first step in the D-alanylation of lipoteichoic acid (LTA), the activation of D-alanine and its transfer onto the D-alanyl carrier protein (Dcp) DltC. In an ATP-dependent two-step reaction, forms a high energy D-alanyl-AMP intermediate, followed by transfer of the D-alanyl residue as a thiol ester to the phosphopantheinyl prosthetic group of the Dcp. D-alanylation of LTA plays an important role in modulating the properties of the cell wall in Gram-positive bacteria, influencing the net charge of the cell wall. The sequence is that of D-alanine--D-alanyl carrier protein ligase from Lactococcus lactis subsp. lactis (strain IL1403) (Streptococcus lactis).